We begin with the raw amino-acid sequence, 470 residues long: MDERFNKWLLTPVLTLLFVVIMYQYVSPSCTSSCTNFGEQLRSGEARPPAVPSPARRAQAPLDEWERRPQLPPPPRGPPEGSRGVAAPEDEDEDPGDPEEEEEEEEEEPDPEAPENGSLPRFVPRFNFTLKDLTRFVDFNIKGRDVIVFLHIQKTGGTTFGRHLVKNIRLEQPCSCKAGQKKCTCHRPGKKETWLFSRFSTGWSCGLHADWTELTNCVPAIMEKKDCPRNHSHTRNFYYITMLRDPVSRYLSEWKHVQRGATWKTSLHMCDGRSPTPDELPTCYPGDDWSGVSLREFMDCSYNLANNRQVRMLADLSLVGCYNLTFMNESERNTILLQSAKNNLKNMAFFGLTEFQRKTQFLFERTFNLKFISPFTQFNITRASNVDINDGARQHIEELNFLDMQLYEYAKDLFQQRYHHTKQLEHQRDRQKRREERRLQREHRAHRWPKEDRAMEGTVTEDYNSQVVRW.

At 1–4 (MDER) the chain is on the cytoplasmic side. A helical; Signal-anchor for type II membrane protein membrane pass occupies residues 5–27 (FNKWLLTPVLTLLFVVIMYQYVS). Topologically, residues 28-470 (PSCTSSCTNF…EDYNSQVVRW (443 aa)) are lumenal. Residues 36-121 (NFGEQLRSGE…EAPENGSLPR (86 aa)) form a disordered region. Residues 88 to 113 (PEDEDEDPGDPEEEEEEEEEEPDPEA) show a composition bias toward acidic residues. Asn116 and Asn127 each carry an N-linked (GlcNAc...) asparagine glycan. 151 to 159 (HIQKTGGTT) contributes to the 3'-phosphoadenylyl sulfate binding site. Substrate-binding positions include 181-182 (KK), Arg198, Trp203, and His208. His208 functions as the Proton acceptor in the catalytic mechanism. N-linked (GlcNAc...) asparagine glycosylation occurs at Asn230. 3'-phosphoadenylyl sulfate-binding residues include Arg244 and Ser252. His256 and Trp263 together coordinate substrate. N-linked (GlcNAc...) asparagine glycosylation is found at Asn323 and Asn328. Residue 376-378 (TQF) coordinates 3'-phosphoadenylyl sulfate. Residue Asn379 is glycosylated (N-linked (GlcNAc...) asparagine). Residue 382-383 (RA) participates in 3'-phosphoadenylyl sulfate binding. The tract at residues 421-453 (TKQLEHQRDRQKRREERRLQREHRAHRWPKEDR) is disordered. Basic and acidic residues predominate over residues 422–439 (KQLEHQRDRQKRREERRL).

This sequence belongs to the sulfotransferase 6 family. Ubiquitously expressed.

It localises to the membrane. It catalyses the reaction alpha-D-glucosaminyl-[heparan sulfate](n) + 3'-phosphoadenylyl sulfate = 6-sulfo-alpha-D-glucosaminyl-[heparan sulfate](n) + adenosine 3',5'-bisphosphate + H(+). Its function is as follows. 6-O-sulfation enzyme which catalyzes the transfer of sulfate from 3'-phosphoadenosine 5'-phosphosulfate (PAPS) to position 6 of the N-sulfoglucosamine residue (GlcNS) of heparan sulfate. This Mus musculus (Mouse) protein is Heparan-sulfate 6-O-sulfotransferase 3 (Hs6st3).